The sequence spans 140 residues: Sex-regulated protein janus-B (140 aa).

A substrate-binding site is contributed by Arg42. His69 (proton acceptor) is an active-site residue. 110–112 (SRT) provides a ligand contact to substrate.

Belongs to the janus family.

Its function is as follows. JanA and janB regulate somatic sex differentiation. This is Sex-regulated protein janus-B (janB) from Drosophila sechellia (Fruit fly).